A 99-amino-acid chain; its full sequence is Ferredoxin, heterocyst (99 aa).

Residues tyrosine 4–proline 96 enclose the 2Fe-2S ferredoxin-type domain. Positions 42, 47, 50, and 80 each coordinate [2Fe-2S] cluster.

This sequence belongs to the 2Fe2S plant-type ferredoxin family. It depends on [2Fe-2S] cluster as a cofactor.

Its function is as follows. Ferredoxins are iron-sulfur proteins that transfer electrons in a wide variety of metabolic reactions. The polypeptide is Ferredoxin, heterocyst (fdxH) (Microchaete diplosiphon (Fremyella diplosiphon)).